The sequence spans 84 residues: MERNLRKTRVGRVVSDKMDKTITVLVEDFVRHPLYGKAVKRTKKFKAHDEMNECRIGDRVRIMETKPLSKDKRWRLVQIVEKAK.

It belongs to the universal ribosomal protein uS17 family. Part of the 30S ribosomal subunit.

One of the primary rRNA binding proteins, it binds specifically to the 5'-end of 16S ribosomal RNA. The protein is Small ribosomal subunit protein uS17 of Alkaliphilus oremlandii (strain OhILAs) (Clostridium oremlandii (strain OhILAs)).